A 570-amino-acid polypeptide reads, in one-letter code: Eukaryotic translation initiation factor 2A (570 aa).

WD repeat units lie at residues 274-316 and 318-358; these read EKKG…FDTI and GPRN…EIIS. Residues 468 to 526 form a disordered region; that stretch reads PPHLRKPLGGGGSAGPPSAAAPTPGNQNQRPAQPRANGNGNAPQPFRPQQSEQERKAFQ. The segment covering 482–492 has biased composition (low complexity); the sequence is GPPSAAAPTPG. Polar residues predominate over residues 493-518; the sequence is NQNQRPAQPRANGNGNAPQPFRPQQS. A coiled-coil region spans residues 519 to 541; that stretch reads EQERKAFQLKKKVEEIKVLKQRV.

Belongs to the WD repeat EIF2A family.

Functions in the early steps of protein synthesis of a small number of specific mRNAs. Acts by directing the binding of methionyl-tRNAi to 40S ribosomal subunits. In contrast to the eIF-2 complex, it binds methionyl-tRNAi to 40S subunits in a codon-dependent manner, whereas the eIF-2 complex binds methionyl-tRNAi to 40S subunits in a GTP-dependent manner. This Caenorhabditis elegans protein is Eukaryotic translation initiation factor 2A.